The chain runs to 165 residues: E3 ubiquitin-protein ligase RNF181 (165 aa).

The segment at 88–129 (CPVCLLEFEEEETVIEMPCHHLFHSNCILPWLSKTNSCPLCR) adopts an RING-type; atypical zinc-finger fold. The segment at 136 to 165 (DDSYEEHKKDKARRQQQQHRLENLHGAMYT) is disordered. Threonine 165 is subject to Phosphothreonine.

It belongs to the RNF181 family. In terms of assembly, directly interacts with ITGA2B and, as a result, with integrin ITGA2B/ITGB3. There is no evidence that integrin ITGA2B/ITGB3 is an endogenous substrate for RNF181-directed ubiquitination. In terms of processing, auto-ubiquitinated as part of the enzymatic reaction.

The catalysed reaction is S-ubiquitinyl-[E2 ubiquitin-conjugating enzyme]-L-cysteine + [acceptor protein]-L-lysine = [E2 ubiquitin-conjugating enzyme]-L-cysteine + N(6)-ubiquitinyl-[acceptor protein]-L-lysine.. The protein operates within protein modification; protein ubiquitination. Functionally, E3 ubiquitin-protein ligase which accepts ubiquitin from an E2 ubiquitin-conjugating enzyme in the form of a thioester and then directly transfers the ubiquitin to targeted substrates. Catalyzes monoubiquitination of 26S proteasome subunit PSMC2/RPT1. The polypeptide is E3 ubiquitin-protein ligase RNF181 (Rnf181) (Rattus norvegicus (Rat)).